The following is a 427-amino-acid chain: 3-phosphoshikimate 1-carboxyvinyltransferase (427 aa).

3-phosphoshikimate-binding residues include Lys-22, Ser-23, and Arg-27. Lys-22 contributes to the phosphoenolpyruvate binding site. Residues Gly-96 and Arg-124 each coordinate phosphoenolpyruvate. 3-phosphoshikimate-binding residues include Ser-169, Ser-170, Gln-171, Ser-197, Asp-313, Asn-336, and Lys-340. Residue Gln-171 participates in phosphoenolpyruvate binding. Residue Asp-313 is the Proton acceptor of the active site. 3 residues coordinate phosphoenolpyruvate: Arg-344, Arg-386, and Lys-411.

This sequence belongs to the EPSP synthase family. As to quaternary structure, monomer.

The protein localises to the cytoplasm. It carries out the reaction 3-phosphoshikimate + phosphoenolpyruvate = 5-O-(1-carboxyvinyl)-3-phosphoshikimate + phosphate. The protein operates within metabolic intermediate biosynthesis; chorismate biosynthesis; chorismate from D-erythrose 4-phosphate and phosphoenolpyruvate: step 6/7. In terms of biological role, catalyzes the transfer of the enolpyruvyl moiety of phosphoenolpyruvate (PEP) to the 5-hydroxyl of shikimate-3-phosphate (S3P) to produce enolpyruvyl shikimate-3-phosphate and inorganic phosphate. This is 3-phosphoshikimate 1-carboxyvinyltransferase from Salmonella agona (strain SL483).